Consider the following 233-residue polypeptide: Thrombin-like enzyme elegaxobin-2 (233 aa).

The region spanning 1–224 (VIGGDECNIN…HLDWIKGIIA (224 aa)) is the Peptidase S1 domain. 6 disulfide bridges follow: Cys7–Cys138, Cys25–Cys41, Cys73–Cys231, Cys117–Cys185, Cys149–Cys164, and Cys175–Cys200. His40 serves as the catalytic Charge relay system. Asn78 is a glycosylation site (N-linked (GlcNAc...) asparagine). The active-site Charge relay system is Asp85. Ser179 (charge relay system) is an active-site residue.

It belongs to the peptidase S1 family. Snake venom subfamily. Monomer. As to expression, expressed by the venom gland.

It is found in the secreted. Functionally, thrombin-like snake venom serine protease that clots rabbit fibrinogen. Only the beta chain of fibrinogen (FGB) is cleaved, releasing fibrinopeptide B. Human and bovine fibrinogen are unaffected. Also cleaves Met-Lys and Arg-Ser bonds in heat-denatured bovine plasma kininogen to release Lys-bradykinin. The chain is Thrombin-like enzyme elegaxobin-2 from Protobothrops elegans (Elegant pitviper).